We begin with the raw amino-acid sequence, 189 residues long: GTPase HRas (189 aa).

10-17 (GARGVGKS) contacts GTP. Residues 32-40 (YDPTIEDSY) carry the Effector region motif. GTP contacts are provided by residues 57-61 (DTAGQ) and 116-119 (NKCD). Residues C181 and C184 are each lipidated (S-palmitoyl cysteine; by host). At C186 the chain carries Cysteine methyl ester; by host. The S-farnesyl cysteine; by host moiety is linked to residue C186. A propeptide spans 187-189 (VLS) (removed in mature form).

It belongs to the small GTPase superfamily. Ras family.

The protein resides in the host cell membrane. The enzyme catalyses GTP + H2O = GDP + phosphate + H(+). Its activity is regulated as follows. Alternates between an inactive form bound to GDP and an active form bound to GTP. Activated by a guanine nucleotide-exchange factor (GEF) and inactivated by a GTPase-activating protein (GAP). This is GTPase HRas (H-RAS) from Mus musculus (Mouse).